The chain runs to 362 residues: GTPase Obg (362 aa).

Positions 1-159 (MKFLDEAKVY…KTIWLRLKLI (159 aa)) constitute an Obg domain. Residues 160 to 327 (ADAGLVGLPN…VLRALRDVIV (168 aa)) form the OBG-type G domain. Residues 166–173 (GLPNAGKS), 191–195 (FTTLH), 212–215 (DIPG), 279–282 (SQID), and 308–310 (SAV) each bind GTP. Residues Ser-173 and Thr-193 each coordinate Mg(2+). The interval 332–362 (EEKPAKVPKLRHRDMIVSDEGEGEDGADDQP) is disordered. Acidic residues predominate over residues 348–362 (VSDEGEGEDGADDQP).

The protein belongs to the TRAFAC class OBG-HflX-like GTPase superfamily. OBG GTPase family. As to quaternary structure, monomer. Mg(2+) is required as a cofactor.

It is found in the cytoplasm. Its function is as follows. An essential GTPase which binds GTP, GDP and possibly (p)ppGpp with moderate affinity, with high nucleotide exchange rates and a fairly low GTP hydrolysis rate. Plays a role in control of the cell cycle, stress response, ribosome biogenesis and in those bacteria that undergo differentiation, in morphogenesis control. The polypeptide is GTPase Obg (Rhizobium etli (strain CIAT 652)).